A 726-amino-acid chain; its full sequence is Catalase-peroxidase (726 aa).

The tryptophyl-tyrosyl-methioninium (Trp-Tyr) (with M-239) cross-link spans 90 to 213 (WHAAGTYRIG…LAAVQMGLIY (124 aa)). Histidine 91 serves as the catalytic Proton acceptor. A cross-link (tryptophyl-tyrosyl-methioninium (Tyr-Met) (with W-90)) is located at residues 213–239 (YVNPEGPNGKPDPAAAARDIRETFARM). Heme b is bound at residue histidine 254. A disordered region spans residues 338-359 (TPKGGAGAGTVPDAHDPSKRHA).

This sequence belongs to the peroxidase family. Peroxidase/catalase subfamily. Homodimer or homotetramer. It depends on heme b as a cofactor. Post-translationally, formation of the three residue Trp-Tyr-Met cross-link is important for the catalase, but not the peroxidase activity of the enzyme.

The catalysed reaction is H2O2 + AH2 = A + 2 H2O. The enzyme catalyses 2 H2O2 = O2 + 2 H2O. Functionally, bifunctional enzyme with both catalase and broad-spectrum peroxidase activity. The polypeptide is Catalase-peroxidase (Bradyrhizobium sp. (strain ORS 278)).